A 1520-amino-acid chain; its full sequence is DNA topoisomerase 2 top-2 (1520 aa).

A compositionally biased stretch (acidic residues) spans 1-10 (MSDSDSEFSI). The tract at residues 1 to 40 (MSDSDSEFSIEDSPKKKTAPKKEKASPKKKKDDANESMVM) is disordered. Basic and acidic residues predominate over residues 12-34 (DSPKKKTAPKKEKASPKKKKDDA). ATP contacts are provided by residues asparagine 126, asparagine 155, 183 to 185 (SSN), 196 to 203 (GRNGYGAK), and 411 to 413 (QTK). The 118-residue stretch at 490–607 (CTLILTEGDS…SLIQRNFVEE (118 aa)) folds into the Toprim domain. Residues glutamate 496, aspartate 576, and aspartate 578 each coordinate Mg(2+). A Topo IIA-type catalytic domain is found at 750–1219 (IPCLVDGFKP…TWQDLWHEDL (470 aa)). The O-(5'-phospho-DNA)-tyrosine intermediate role is filled by tyrosine 840. A disordered region spans residues 1249–1520 (AADAKTGRGP…RGRVVDSDSD (272 aa)). Positions 1283-1320 (TKAKYEKMSQPKKERVKKEPKEPKEPKKVKKEGQDIKK) are enriched in basic and acidic residues. Positions 1342–1364 (MSEESDVEFDEGIDFDSDDDGVE) are enriched in acidic residues.

Belongs to the type II topoisomerase family. Homodimer. Interacts with nmad-1; the interaction is required for localization of top-2 to DNA. Interacts with gcna-1; this interaction allows the resolution of topoisomerase 2 DNA-protein cross-links. Mg(2+) serves as cofactor. Requires Mn(2+) as cofactor. It depends on Ca(2+) as a cofactor. Expressed in the hermaphrodite and male germline.

It is found in the nucleus. The protein resides in the nucleoplasm. It localises to the chromosome. The protein localises to the cytoplasm. Its subcellular location is the cytoskeleton. It is found in the spindle. It catalyses the reaction ATP-dependent breakage, passage and rejoining of double-stranded DNA.. Functionally, control of topological states of DNA by transient breakage and subsequent rejoining of DNA strands. Topoisomerase II makes double-strand breaks. Essential during mitosis in the adult germline and during embryogenesis for proper segregation of daughter chromosomes. Required for centromere resolution during mitosis. Required for chromosome segregation in anaphase of meiosis I during spermatogenesis. Promotes cleavage furrow stability during cytokinesis upon the presence of chromatin obstructions. Promotes DNA break formation upon zygotic genome activation in the Z2 and Z3 primordial germ cells in L1 larvae, thereby activating a checkpoint response. Essential for embryogenesis. This Caenorhabditis elegans protein is DNA topoisomerase 2 top-2.